We begin with the raw amino-acid sequence, 453 residues long: MREGSHVIVLPFPAQGHITPMSQFCKRLASKSLKITLVLVSDKPSPPYKTEHDTITVVPISNGFQEGQERSEDLDEYMERVESSIKNRLPKLIEDMKLSGNPPRALVYDSTMPWLLDVAHSYGLSGAVFFTQPWLVSAIYYHVFKGSFSVPSTKYGHSTLASFPSLPILNANDLPSFLCESSSYPYILRTVIDQLSNIDRVDIVLCNTFDKLEEKLLKWIKSVWPVLNIGPTVPSMYLDKRLAEDKNYGFSLFGAKIAECMEWLNSKQPSSVVYVSFGSLVVLKKDQLIELAAGLKQSGHFFLWVVRETERRKLPENYIEEIGEKGLTVSWSPQLEVLTHKSIGCFVTHCGWNSTLEGLSLGVPMIGMPHWADQPTNAKFMEDVWKVGVRVKADSDGFVRREEFVRRVEEVMEAEQGKEIRKNAEKWKVLAQEAVSEGGSSDKNINEFVSMFC.

UDP-alpha-D-glucose contacts are provided by residues serine 279, 332–334 (SPQ), 349–357 (HCGWNSTLE), and 371–374 (WADQ).

Belongs to the UDP-glycosyltransferase family.

This Arabidopsis thaliana (Mouse-ear cress) protein is UDP-glycosyltransferase 74E1 (UGT74E1).